Here is a 187-residue protein sequence, read N- to C-terminus: Calcium and integrin-binding family member 2 (187 aa).

3 EF-hand domains span residues 66–101, 103–138, and 144–179; these read RENP…LCES, PREL…LTKS, and EVVL…APDF. Ca(2+) is bound by residues Asp-116, Asn-118, Asp-120, Asp-127, Asp-157, Asp-159, Asp-161, Lys-163, and Asp-168.

In terms of assembly, monomer. Homodimer. Interacts with WHRN and MYO7A. Interacts with ITGA2B (via C-terminus cytoplasmic tail region); this interaction is stabilized/increased in a calcium and magnesium-dependent manner. Interacts with ITGA7 (via C-terminus cytoplasmic tail region); this interaction is stabilized/increased in a calcium and magnesium-dependent manner. Interacts with TMC1. Interacts with TMC2. Interacts with PIEZO1. Expressed in inner and outer segments of photoreceptor cells, as well as in the pigmented epithelium. Also observed in the inner and outer plexiform layers and in the ganglion cell layer (at protein level). Expressed in sensory hair cell stereocilia, with expression mainly at the basal body of the kinocilium and in the hair bundle stereocilia; and the apical surface of hair cells (at protein level). Located in the tip region of the stereocilia and at the apical surface of hair cells around the cuticular plate (at protein level). Not expressed in the hair bundles of the vestibular hair cells. Strongly expressed in skeletal muscles, brain, kidney and liver. Expressed in the skeletal muscle, retina and cochlea. Expressed in megakaryocytes and endothelial cells. Expressed in heart, spleen, lung, and inner ear. In the inner ear, expressed in the vestibule, basilar membrane and spiral ganglion cells. Expressed in the supporting cells in both the organ of Corti and the vestibular sensory epithelia.

The protein localises to the cytoplasm. Its subcellular location is the cell projection. It localises to the stereocilium. The protein resides in the photoreceptor inner segment. It is found in the cilium. The protein localises to the photoreceptor outer segment. Its subcellular location is the cell membrane. It localises to the sarcolemma. In terms of biological role, calcium- and integrin-binding protein that plays a role in intracellular calcium homeostasis. Acts as an auxiliary subunit of the sensory mechanoelectrical transduction (MET) channel in hair cells. Essential for mechanoelectrical transduction (MET) currents in auditory hair cells and thereby required for hearing. Regulates the function of hair cell mechanotransduction by controlling the distribution of transmembrane channel-like proteins TMC1 and TMC2, and by regulating the function of the MET channels in hair cells. Required for the maintenance of auditory hair cell stereocilia bundle morphology and function and for hair-cell survival in the cochlea. Critical for proper photoreceptor cell maintenance and function. Plays a role in intracellular calcium homeostasis by decreasing ATP-induced calcium release. Seems to be dispensable for vestibular functions. The polypeptide is Calcium and integrin-binding family member 2 (Cib2) (Mus musculus (Mouse)).